The sequence spans 205 residues: Protein-L-isoaspartate O-methyltransferase (205 aa).

S52 is a catalytic residue.

Belongs to the methyltransferase superfamily. L-isoaspartyl/D-aspartyl protein methyltransferase family.

The protein localises to the cytoplasm. It carries out the reaction [protein]-L-isoaspartate + S-adenosyl-L-methionine = [protein]-L-isoaspartate alpha-methyl ester + S-adenosyl-L-homocysteine. Functionally, catalyzes the methyl esterification of L-isoaspartyl residues in peptides and proteins that result from spontaneous decomposition of normal L-aspartyl and L-asparaginyl residues. It plays a role in the repair and/or degradation of damaged proteins. This Gloeobacter violaceus (strain ATCC 29082 / PCC 7421) protein is Protein-L-isoaspartate O-methyltransferase.